We begin with the raw amino-acid sequence, 283 residues long: 2-dehydro-3-deoxyphosphooctonate aldolase (283 aa).

Belongs to the KdsA family.

The protein resides in the cytoplasm. The enzyme catalyses D-arabinose 5-phosphate + phosphoenolpyruvate + H2O = 3-deoxy-alpha-D-manno-2-octulosonate-8-phosphate + phosphate. It functions in the pathway carbohydrate biosynthesis; 3-deoxy-D-manno-octulosonate biosynthesis; 3-deoxy-D-manno-octulosonate from D-ribulose 5-phosphate: step 2/3. Its pathway is bacterial outer membrane biogenesis; lipopolysaccharide biosynthesis. This is 2-dehydro-3-deoxyphosphooctonate aldolase from Vibrio cholerae serotype O1 (strain ATCC 39315 / El Tor Inaba N16961).